The following is a 432-amino-acid chain: Bouquet formation protein 4 (432 aa).

The disordered stretch occupies residues 1 to 21 (MTENEKSRSLPAERNPLYKDD). In terms of domain architecture, HTH APSES-type spans 38–147 (EFPDGPATFV…SSTPSTYATP (110 aa)). A DNA-binding region (H-T-H motif) is located at residues 73–94 (ATSMFRSAFPKATQEEEDLEMR). 2 stretches are compositionally biased toward low complexity: residues 139 to 152 (STPS…RPTA) and 163 to 172 (ESSTSATTTS). Disordered regions lie at residues 139-283 (STPS…GKIR) and 364-384 (KSSI…FEEN). The segment covering 180–228 (RLAEHLENSKKTILQHDNKEEDKEIHSEENETKDEIKSEKKEPEIKKQE) has biased composition (basic and acidic residues). A compositionally biased stretch (polar residues) spans 229–241 (GGSSTEKVGQPSS).

As to quaternary structure, interacts with rap1.

It localises to the cytoplasm. The protein localises to the nucleus. The protein resides in the nucleus inner membrane. In terms of biological role, connects telomeres to the nuclear envelop (NE) during both vegetative growth and meiosis. This connection ensures clustering of telomeres to the spindle pole body (SPB) when cells enter meiotic prophase. The polypeptide is Bouquet formation protein 4 (bqt4) (Schizosaccharomyces pombe (strain 972 / ATCC 24843) (Fission yeast)).